A 602-amino-acid polypeptide reads, in one-letter code: Elongation factor 4 (602 aa).

The 182-residue stretch at 7–188 (ENIRNFSIIA…AIIELIPPPK (182 aa)) folds into the tr-type G domain. GTP contacts are provided by residues 19–24 (DHGKST) and 135–138 (NKID).

It belongs to the TRAFAC class translation factor GTPase superfamily. Classic translation factor GTPase family. LepA subfamily.

It is found in the cell inner membrane. The catalysed reaction is GTP + H2O = GDP + phosphate + H(+). Functionally, required for accurate and efficient protein synthesis under certain stress conditions. May act as a fidelity factor of the translation reaction, by catalyzing a one-codon backward translocation of tRNAs on improperly translocated ribosomes. Back-translocation proceeds from a post-translocation (POST) complex to a pre-translocation (PRE) complex, thus giving elongation factor G a second chance to translocate the tRNAs correctly. Binds to ribosomes in a GTP-dependent manner. The sequence is that of Elongation factor 4 from Chlamydia caviae (strain ATCC VR-813 / DSM 19441 / 03DC25 / GPIC) (Chlamydophila caviae).